Reading from the N-terminus, the 298-residue chain is Tryptophan 2,3-dioxygenase (298 aa).

Residues 51–55, Tyr-113, and Arg-117 contribute to the substrate site; that span reads FIIQH. Heme is bound at residue His-240. Thr-254 contributes to the substrate binding site.

The protein belongs to the tryptophan 2,3-dioxygenase family. As to quaternary structure, homotetramer. It depends on heme as a cofactor.

The catalysed reaction is L-tryptophan + O2 = N-formyl-L-kynurenine. Its pathway is amino-acid degradation; L-tryptophan degradation via kynurenine pathway; L-kynurenine from L-tryptophan: step 1/2. In terms of biological role, heme-dependent dioxygenase that catalyzes the oxidative cleavage of the L-tryptophan (L-Trp) pyrrole ring and converts L-tryptophan to N-formyl-L-kynurenine. Catalyzes the oxidative cleavage of the indole moiety. The chain is Tryptophan 2,3-dioxygenase from Xanthomonas campestris pv. campestris (strain 8004).